The sequence spans 152 residues: Transcriptional regulator MraZ (152 aa).

2 SpoVT-AbrB domains span residues 5 to 52 (ANAI…PLPE) and 81 to 124 (ATEG…DHSV).

Belongs to the MraZ family. As to quaternary structure, forms oligomers.

It localises to the cytoplasm. The protein localises to the nucleoid. This is Transcriptional regulator MraZ from Pseudoalteromonas atlantica (strain T6c / ATCC BAA-1087).